Consider the following 94-residue polypeptide: DNA-directed RNA polymerase subunit omega (94 aa).

It belongs to the RNA polymerase subunit omega family. The RNAP catalytic core consists of 2 alpha, 1 beta, 1 beta' and 1 omega subunit. When a sigma factor is associated with the core the holoenzyme is formed, which can initiate transcription.

The catalysed reaction is RNA(n) + a ribonucleoside 5'-triphosphate = RNA(n+1) + diphosphate. In terms of biological role, promotes RNA polymerase assembly. Latches the N- and C-terminal regions of the beta' subunit thereby facilitating its interaction with the beta and alpha subunits. The polypeptide is DNA-directed RNA polymerase subunit omega (Bifidobacterium longum (strain DJO10A)).